An 842-amino-acid chain; its full sequence is Alanine--tRNA ligase (842 aa).

Residues histidine 549, histidine 553, cysteine 650, and histidine 654 each coordinate Zn(2+).

Belongs to the class-II aminoacyl-tRNA synthetase family. Zn(2+) serves as cofactor.

It is found in the cytoplasm. It carries out the reaction tRNA(Ala) + L-alanine + ATP = L-alanyl-tRNA(Ala) + AMP + diphosphate. Its function is as follows. Catalyzes the attachment of alanine to tRNA(Ala) in a two-step reaction: alanine is first activated by ATP to form Ala-AMP and then transferred to the acceptor end of tRNA(Ala). Also edits incorrectly charged Ser-tRNA(Ala) and Gly-tRNA(Ala) via its editing domain. The polypeptide is Alanine--tRNA ligase (Campylobacter jejuni subsp. jejuni serotype O:6 (strain 81116 / NCTC 11828)).